The sequence spans 64 residues: Large ribosomal subunit protein bL35 (64 aa).

Positions 1 to 28 (MSKAKTHSGAAKRFKKTASGYKHKHAFK) are enriched in basic residues. Positions 1–51 (MSKAKTHSGAAKRFKKTASGYKHKHAFKSHILTKMTTKRKRQLRGTSLLNA) are disordered.

Belongs to the bacterial ribosomal protein bL35 family.

The chain is Large ribosomal subunit protein bL35 from Saccharophagus degradans (strain 2-40 / ATCC 43961 / DSM 17024).